The chain runs to 172 residues: Translation initiation factor IF-3 (172 aa).

This sequence belongs to the IF-3 family. In terms of assembly, monomer.

Its subcellular location is the cytoplasm. IF-3 binds to the 30S ribosomal subunit and shifts the equilibrium between 70S ribosomes and their 50S and 30S subunits in favor of the free subunits, thus enhancing the availability of 30S subunits on which protein synthesis initiation begins. This is Translation initiation factor IF-3 from Geobacillus stearothermophilus (Bacillus stearothermophilus).